A 240-amino-acid chain; its full sequence is Poxin (240 aa).

H46 acts as the Proton donor in catalysis. Y181 functions as the Shared with catalytic histidine of dimeric partner in the catalytic mechanism. K185 serves as the catalytic Proton acceptor; shared with catalytic histidine of dimeric partner.

Belongs to the poxin family. In terms of assembly, homodimer.

It carries out the reaction 2',3'-cGAMP + H2O = Gp(2'-5')Ap(3') + H(+). Its function is as follows. Nuclease that cleaves host 2',3'-cGAMP. In Bombyx mori (Silk moth), this protein is Poxin (p26).